Consider the following 617-residue polypeptide: MSGKAQQQSRLKELIARGREQGYLTYAEVNDHLPEDISDPEQVEDIIRMINDMGINVFETAPDADALLLAEADTDEAAAEEAAAALAAVESDIGRTTDPVRMYMREMGTVELLTREGEIEIAKRIEEGIREVMSAIAQFPGTVDSILADYNRIVAEGGRLSDVLSGYIDPDDGSLPAEEVEPVNLKDDSADSKEKDDEEEESDDSSDSDDEGDGGPDPEEARLRFTAVSEQLDKAKKALKKHGRGSKQATAELTGLAELFMPIKLVPKQFDALVARVRSALEGVRAQERAIMQLCVRDARMPRADFLRLFPNHETDEKWVDSVLKSKPKYAEAIERLRDDILRNQQKLAALESEVELTVAEIKEINRAMSIGEAKARRAKKEMVEANLRLVISIAKKYTNRGLQFLDLIQEGNIGLMKAVDKFEYRRGYKFSTYATWWIRQAITRSIADQARTIRIPVHMIETINKLNRISRQMLQEMGREPTPEELGERMDMPEDKIRKVLKIAKEPISMETPIGDDEDSHLGDFIEDSTMQSPIEMATSESLKESTREVLAGLTAREAKVLRMRFGIDMNTDHTLEEVGKQFDVTRERIRQIEAKALRKLRHPSRSEHLRSFLDE.

The disordered stretch occupies residues proline 170 to glutamate 220. Positions asparagine 184–lysine 195 are enriched in basic and acidic residues. The span at aspartate 196–proline 218 shows a compositional bias: acidic residues. A sigma-70 factor domain-2 region spans residues methionine 383–threonine 453. The short motif at aspartate 407–glutamine 410 is the Interaction with polymerase core subunit RpoC element. The sigma-70 factor domain-3 stretch occupies residues glutamate 462 to methionine 538. The sigma-70 factor domain-4 stretch occupies residues valine 551 to histidine 604. The H-T-H motif DNA-binding region spans leucine 577–alanine 596.

Belongs to the sigma-70 factor family. RpoD/SigA subfamily. Interacts transiently with the RNA polymerase catalytic core.

The protein resides in the cytoplasm. Its function is as follows. Sigma factors are initiation factors that promote the attachment of RNA polymerase to specific initiation sites and are then released. This sigma factor is the primary sigma factor during exponential growth. This chain is RNA polymerase sigma factor RpoD, found in Pseudomonas aeruginosa (strain ATCC 15692 / DSM 22644 / CIP 104116 / JCM 14847 / LMG 12228 / 1C / PRS 101 / PAO1).